The primary structure comprises 566 residues: Peroxisomal leader peptide-processing protease (566 aa).

The serine protease stretch occupies residues 319–531 (ALAALLPPEV…LQPALQQYSQ (213 aa)). Residues His372, Asp408, and Ser481 each act as charge relay system in the active site.

It belongs to the peptidase S1B family. As to quaternary structure, homodimer. Forms a heterodimer with the C-terminal cleavage product (45 kDa form). Forms a heterodimer with the N-terminal cleavage product (15 kDa form). Interacts with PEX5. Interacts with LONP2. Self-cleavage gives rise to an N-terminal 15-kDa fragment and C-terminal 45-kDa fragment upon import into the peroxisomes. The full-lengh TYSND1 is the active the proteolytic processing of PTS1- and PTS2-proteins and in self-cleavage, and intermolecular self-cleavage of TYSND1 down-regulates its protease activity.

Its subcellular location is the peroxisome. In terms of biological role, peroxisomal protease that mediates both the removal of the leader peptide from proteins containing a PTS2 target sequence and processes several PTS1-containing proteins. Catalyzes the processing of PTS1-proteins involved in the peroxisomal beta-oxidation of fatty acids. The sequence is that of Peroxisomal leader peptide-processing protease (TYSND1) from Homo sapiens (Human).